The primary structure comprises 434 residues: MHVIVLGSGVIGTTTAYYLARQGAQVTVLERRAGPADETSYGNAGQVSPGYSTPWAAPGIPLKALKWMFQKHAPLAIRADGSFYQWRWLAAMLANCSAGRYSVNKERMLRLAEYSRDCLRTLRADTGIQYEQRTQGTLQLFRTAAQMEAARRDIAVLEECGVPYELLDRNRLPTAEPALARALDKLAGGLRLPNDETGDCRRFTLQLADKAKALGVQFRFNQQVEGLDVRGGQVAGVRVGGEQLAADCYVAAFGSYTRGFLRPLGLDLPVYPVKGYSLTIPMTDESAAPVSTILDETYKVAVTRFDQRIRVGGMAELAGFDLRLKEARRKTLELVVNDLSPGSGAVEQAEFWTGLRPMTPDSTPIIGATKYGNLFLNTGHGTLGWTMACGSGQLVADQVCGRQPAIRADDLALSRYGAGGQAGGGVARAQHNAA.

Position 3 to 17 (3 to 17 (VIVLGSGVIGTTTAY)) interacts with FAD.

The protein belongs to the DadA oxidoreductase family. Requires FAD as cofactor.

It catalyses the reaction a D-alpha-amino acid + A + H2O = a 2-oxocarboxylate + AH2 + NH4(+). Its function is as follows. Oxidative deamination of D-amino acids. In Bordetella parapertussis (strain 12822 / ATCC BAA-587 / NCTC 13253), this protein is D-amino acid dehydrogenase.